A 391-amino-acid polypeptide reads, in one-letter code: Autotransporter heptosyltransferase Aah (391 aa).

ADP-D-glycero-beta-D-manno-heptose contacts are provided by T101, L102, and G103. D104 serves as the catalytic Proton acceptor. 7 residues coordinate ADP-D-glycero-beta-D-manno-heptose: Q218, T220, K224, R251, L275, G296, and E320. Fe(3+)-binding residues include C333, C336, C352, and C364.

It belongs to the glycosyltransferase 9 family. As to quaternary structure, homododecamer composed of 6 homodimers forming a ring. Requires Fe(3+) as cofactor.

The protein localises to the cytoplasm. It carries out the reaction ADP-D-glycero-beta-D-manno-heptose + L-seryl-[protein] = O-(D-glycero-alpha-D-manno-heptosyl)-L-seryl-[protein] + ADP + H(+). The enzyme catalyses ADP-L-glycero-beta-D-manno-heptose + L-seryl-[protein] = O-(L-glycero-alpha-D-manno-heptosyl)-L-seryl-[protein] + ADP + H(+). Functionally, glycosylates autotransporter AIDA-I. Catalyzes the addition of both L, D-heptose and D, D-heptose sugars. Probably by glycosylating AIDA-I, involved in bacteria adhesion to host mammalian cells. This chain is Autotransporter heptosyltransferase Aah, found in Escherichia coli.